A 223-amino-acid chain; its full sequence is Cytidylate kinase (223 aa).

10–18 lines the ATP pocket; it reads GPASSGKST.

This sequence belongs to the cytidylate kinase family. Type 1 subfamily.

It is found in the cytoplasm. The enzyme catalyses CMP + ATP = CDP + ADP. It catalyses the reaction dCMP + ATP = dCDP + ADP. This is Cytidylate kinase from Streptococcus pneumoniae (strain Taiwan19F-14).